A 205-amino-acid chain; its full sequence is MEYKALIVGLGNPGSEYAKTRHNIGFMAVDALAEVAKSRKSMRFKEMGISGDFELFSLNLAGNNVLATKPLTYMNLSGKAVAAICGKYSIAVSDVYVIHDELDLPCGRMKFKKGGGNNGHRGLESIQEKMGSPNFFRIRVGIGRPEFSSQVKDYVLEEFNTQELAIAAQMSQAAIKGLNLHFRRGQGTATQFMNSFMPDLPETEP.

TRNA is bound at residue tyrosine 17. Histidine 22 serves as the catalytic Proton acceptor. TRNA-binding residues include tyrosine 73 and asparagine 75.

This sequence belongs to the PTH family. Monomer.

It is found in the cytoplasm. It catalyses the reaction an N-acyl-L-alpha-aminoacyl-tRNA + H2O = an N-acyl-L-amino acid + a tRNA + H(+). Its function is as follows. Hydrolyzes ribosome-free peptidyl-tRNAs (with 1 or more amino acids incorporated), which drop off the ribosome during protein synthesis, or as a result of ribosome stalling. In terms of biological role, catalyzes the release of premature peptidyl moieties from peptidyl-tRNA molecules trapped in stalled 50S ribosomal subunits, and thus maintains levels of free tRNAs and 50S ribosomes. The chain is Peptidyl-tRNA hydrolase from Maridesulfovibrio salexigens (strain ATCC 14822 / DSM 2638 / NCIMB 8403 / VKM B-1763) (Desulfovibrio salexigens).